Consider the following 295-residue polypeptide: MDRIALMDAPDTDWSAWPAPAKLNLFLQITGRRADGYHLLQTVFRLLDWGDTVHLRVRSGGQIRRVGESLPGVAEDDDLVIRAARLLQSATGAQAGAEIRVDKRIPAGGGFGGGSSDAATVLVALNALWGLGLAADALAELGLQLGADVPVFVRGHNAWAEGVGEQLTPISLPEAAYLLVDPGVHVPTPALFRSQELTRDAAPAKIADFASGSLLDNAFEPVLRRREPAVEAVFQALSRVGTPRLTGSGSGCFVEFATRAAAEQALAQLPGGLRAWVAEGASHSPLLDARDARQV.

The active site involves lysine 22. Residue 106 to 116 (PAGGGFGGGSS) participates in ATP binding. Residue aspartate 148 is part of the active site.

This sequence belongs to the GHMP kinase family. IspE subfamily.

It catalyses the reaction 4-CDP-2-C-methyl-D-erythritol + ATP = 4-CDP-2-C-methyl-D-erythritol 2-phosphate + ADP + H(+). It functions in the pathway isoprenoid biosynthesis; isopentenyl diphosphate biosynthesis via DXP pathway; isopentenyl diphosphate from 1-deoxy-D-xylulose 5-phosphate: step 3/6. Catalyzes the phosphorylation of the position 2 hydroxy group of 4-diphosphocytidyl-2C-methyl-D-erythritol. The sequence is that of 4-diphosphocytidyl-2-C-methyl-D-erythritol kinase from Xanthomonas axonopodis pv. citri (strain 306).